The sequence spans 201 residues: Retinol-binding protein 4 (201 aa).

The N-terminal stretch at 1-18 (MEWVWALVVLAALGSAGA) is a signal peptide. 3 disulfide bridges follow: Cys22-Cys178, Cys88-Cys192, and Cys138-Cys147. Gln116 contacts substrate. At Arg139 the chain carries Omega-N-methylarginine.

It belongs to the calycin superfamily. Lipocalin family. Interacts with TTR. Interaction with TTR prevents its loss by filtration through the kidney glomeruli. Interacts with STRA6.

Its subcellular location is the secreted. Its function is as follows. Retinol-binding protein that mediates retinol transport in blood plasma. Delivers retinol from the liver stores to the peripheral tissues. Transfers the bound all-trans retinol to STRA6, that then facilitates retinol transport across the cell membrane. The sequence is that of Retinol-binding protein 4 (RBP4) from Equus caballus (Horse).